The primary structure comprises 209 residues: Large ribosomal subunit protein uL3 (209 aa).

N5-methylglutamine is present on Q150.

It belongs to the universal ribosomal protein uL3 family. In terms of assembly, part of the 50S ribosomal subunit. Forms a cluster with proteins L14 and L19. Post-translationally, methylated by PrmB.

Functionally, one of the primary rRNA binding proteins, it binds directly near the 3'-end of the 23S rRNA, where it nucleates assembly of the 50S subunit. The sequence is that of Large ribosomal subunit protein uL3 from Buchnera aphidicola subsp. Acyrthosiphon pisum (strain 5A).